The following is a 522-amino-acid chain: GMP synthase [glutamine-hydrolyzing] (522 aa).

One can recognise a Glutamine amidotransferase type-1 domain in the interval 9-204 (KILILDFGAQ…VVDICGCQTL (196 aa)). Cys-86 acts as the Nucleophile in catalysis. Active-site residues include His-178 and Glu-180. Positions 205–397 (WTAANIIEDQ…LGLPHAMVYR (193 aa)) constitute a GMPS ATP-PPase domain. 232-238 (SGGVDSS) is an ATP binding site.

Homodimer.

It catalyses the reaction XMP + L-glutamine + ATP + H2O = GMP + L-glutamate + AMP + diphosphate + 2 H(+). Its pathway is purine metabolism; GMP biosynthesis; GMP from XMP (L-Gln route): step 1/1. Functionally, catalyzes the synthesis of GMP from XMP. The chain is GMP synthase [glutamine-hydrolyzing] from Xylella fastidiosa (strain M12).